The chain runs to 211 residues: Cytochrome c biogenesis ATP-binding export protein CcmA 2 (211 aa).

An ABC transporter domain is found at 6–208 (LEARELGVRR…GAVLDLATDA (203 aa)). 38–45 (GPNGAGKT) provides a ligand contact to ATP.

This sequence belongs to the ABC transporter superfamily. CcmA exporter (TC 3.A.1.107) family. In terms of assembly, the complex is composed of two ATP-binding proteins (CcmA) and two transmembrane proteins (CcmB).

It is found in the cell inner membrane. It carries out the reaction heme b(in) + ATP + H2O = heme b(out) + ADP + phosphate + H(+). In terms of biological role, part of the ABC transporter complex CcmAB involved in the biogenesis of c-type cytochromes; once thought to export heme, this seems not to be the case, but its exact role is uncertain. Responsible for energy coupling to the transport system. The chain is Cytochrome c biogenesis ATP-binding export protein CcmA 2 from Cupriavidus metallidurans (strain ATCC 43123 / DSM 2839 / NBRC 102507 / CH34) (Ralstonia metallidurans).